The chain runs to 937 residues: Aconitate hydratase A (937 aa).

Positions 439, 505, and 508 each coordinate [4Fe-4S] cluster. Residues 898 to 921 (KKESKSTQSTTSKGCGSADTSSET) form a disordered region.

This sequence belongs to the aconitase/IPM isomerase family. In terms of assembly, monomer. [4Fe-4S] cluster is required as a cofactor.

It catalyses the reaction citrate = D-threo-isocitrate. It carries out the reaction (2S,3R)-3-hydroxybutane-1,2,3-tricarboxylate = 2-methyl-cis-aconitate + H2O. It participates in carbohydrate metabolism; tricarboxylic acid cycle; isocitrate from oxaloacetate: step 2/2. Its pathway is organic acid metabolism; propanoate degradation. In terms of biological role, involved in the catabolism of short chain fatty acids (SCFA) via the tricarboxylic acid (TCA)(acetyl degradation route) and probably the 2-methylcitrate cycle I (propionate degradation route). Catalyzes the reversible isomerization of citrate to isocitrate via cis-aconitate. Could catalyze the hydration of 2-methyl-cis-aconitate to yield (2R,3S)-2-methylisocitrate. The apo form of AcnA functions as a RNA-binding regulatory protein. The chain is Aconitate hydratase A (acn) from Francisella tularensis subsp. holarctica (strain LVS).